The sequence spans 237 residues: MGRAFEFRKGRKMKRWSAMAKTFTRIGKDIVMAVKEGGPNPDANSRLRAVIQNAKAANMPKDNVERAIKNASNKDTANYKEILFEGYAPHGIAILIETASDNNNRTVANIRSYFNKCNGTMGTQGSVEFMFDHTCNFRIAKDGIDAEELELELIDFGAEEVFEDEDGILIYAPFGSFGALQKELENRGLEILSSGFERIPQITKELTEAQIADVEKLIEKIEEDDDVMNVYHTMKEE.

Belongs to the TACO1 family.

It is found in the cytoplasm. This chain is Probable transcriptional regulatory protein Fjoh_2560, found in Flavobacterium johnsoniae (strain ATCC 17061 / DSM 2064 / JCM 8514 / BCRC 14874 / CCUG 350202 / NBRC 14942 / NCIMB 11054 / UW101) (Cytophaga johnsonae).